The chain runs to 272 residues: NH(3)-dependent NAD(+) synthetase (272 aa).

Residue 45–52 (GISGGQDS) coordinates ATP. Mg(2+) is bound at residue aspartate 51. Arginine 138 serves as a coordination point for deamido-NAD(+). Position 158 (threonine 158) interacts with ATP. Glutamate 163 is a binding site for Mg(2+). Residues lysine 171 and aspartate 178 each contribute to the deamido-NAD(+) site. ATP contacts are provided by lysine 187 and threonine 209. 258 to 259 (HK) lines the deamido-NAD(+) pocket.

Belongs to the NAD synthetase family. As to quaternary structure, homodimer.

It carries out the reaction deamido-NAD(+) + NH4(+) + ATP = AMP + diphosphate + NAD(+) + H(+). It participates in cofactor biosynthesis; NAD(+) biosynthesis; NAD(+) from deamido-NAD(+) (ammonia route): step 1/1. Functionally, catalyzes the ATP-dependent amidation of deamido-NAD to form NAD. Uses ammonia as a nitrogen source. This Bacillus velezensis (strain DSM 23117 / BGSC 10A6 / LMG 26770 / FZB42) (Bacillus amyloliquefaciens subsp. plantarum) protein is NH(3)-dependent NAD(+) synthetase.